A 136-amino-acid chain; its full sequence is Large ribosomal subunit protein uL16 (136 aa).

It belongs to the universal ribosomal protein uL16 family. As to quaternary structure, part of the 50S ribosomal subunit.

Binds 23S rRNA and is also seen to make contacts with the A and possibly P site tRNAs. In Edwardsiella ictaluri (strain 93-146), this protein is Large ribosomal subunit protein uL16.